The following is a 400-amino-acid chain: Exodeoxyribonuclease 7 large subunit (400 aa).

This sequence belongs to the XseA family. As to quaternary structure, heterooligomer composed of large and small subunits.

The protein resides in the cytoplasm. It carries out the reaction Exonucleolytic cleavage in either 5'- to 3'- or 3'- to 5'-direction to yield nucleoside 5'-phosphates.. Its function is as follows. Bidirectionally degrades single-stranded DNA into large acid-insoluble oligonucleotides, which are then degraded further into small acid-soluble oligonucleotides. The polypeptide is Exodeoxyribonuclease 7 large subunit (Clostridium perfringens (strain SM101 / Type A)).